The sequence spans 196 residues: MSHSTDLSALARWMAADFSNQAQAFENPPFYAHIRVAIRPLDQAKFGDRLLFLEQAYDFMLQRPYRLRVLKLKVVEDHIEIENFKVKDEEKFYGAARDLGKLAQLTPADLEPMHGCDMIVEWTGTSFKGEVQPGRQCRVMRDGKETYLENSFEVSETGLISLDRGYDPETNERVWGSVAGAFHFVRWQSFADEVSF.

The protein belongs to the CpcT/CpeT biliprotein lyase family.

Functionally, covalently attaches a chromophore to Cys residue(s) of phycobiliproteins. The chain is Chromophore lyase CpcT/CpeT from Synechocystis sp. (strain ATCC 27184 / PCC 6803 / Kazusa).